A 646-amino-acid chain; its full sequence is Secretogranin-1 (646 aa).

Positions 1–20 (MQPAALLGLLGATVVAAVSS) are cleaved as a signal peptide. Cysteine 36 and cysteine 57 are joined by a disulfide. The span at 67-90 (ELKNEEKSENENTRFEVRLLRDPA) shows a compositional bias: basic and acidic residues. The disordered stretch occupies residues 67 to 483 (ELKNEEKSEN…GKQYAPHHIT (417 aa)). Serine 74 is modified (phosphoserine). Residues threonine 79 and threonine 92 each carry the phosphothreonine modification. Phosphoserine is present on residues serine 93, serine 99, serine 100, and serine 104. Serine 93 is a glycosylation site (O-linked (Xyl...) (chondroitin sulfate) serine). O-linked (GalNAc...) threonine glycosylation is present at threonine 113. Composition is skewed to basic and acidic residues over residues 119–128 (SGGHSRERAG) and 137–173 (KEAK…ERLS). Serine 123, serine 146, and serine 168 each carry phosphoserine. Positions 182–191 (AFLNQRNQTP) are enriched in polar residues. Threonine 190 carries O-linked (GalNAc...) threonine glycosylation. A Phosphoserine modification is found at serine 205. Residues 208–228 (GLEKSHSRERSSQESGEETKS) are compositionally biased toward basic and acidic residues. Serine 222 is a glycosylation site (O-linked (Xyl...) (chondroitin sulfate) serine). The segment covering 260–270 (RHSRPRHHHGR) has biased composition (basic residues). A phosphoserine mark is found at serine 276, serine 277, and serine 295. Position 315 is a sulfotyrosine (tyrosine 315). The span at 340–361 (GRGEHQALRRPSEESLEQENKR) shows a compositional bias: basic and acidic residues. Phosphoserine is present on residues serine 351 and serine 354. Tyrosine 374 bears the Phosphotyrosine mark. Phosphoserine occurs at positions 375 and 378. Positions 406–425 (TDEKRFLGETHHRVQESQRD) are enriched in basic and acidic residues. Sulfotyrosine is present on tyrosine 441. Composition is skewed to basic and acidic residues over residues 442–451 (GEEKGEEAAR) and 459–472 (DPRD…EARL). At glutamine 476 the chain carries Pyrrolidone carboxylic acid; in secretogranin-1(476-566). Phosphoserine occurs at positions 502, 503, and 514. Sulfotyrosine is present on tyrosine 535. Pyrrolidone carboxylic acid; in peptide BAM-1745 is present on glutamine 567. Residue serine 584 is modified to Phosphoserine. The interval 588 to 620 (PDFYDSEEQMSPQHTAENEEEKAGQGVLTEEEE) is disordered. Residue tyrosine 591 is modified to Sulfotyrosine. Residues serine 593 and serine 598 each carry the phosphoserine modification. Glutamine 634 is modified (pyrrolidone carboxylic acid; in Secretolytin; partial).

It belongs to the chromogranin/secretogranin protein family. In terms of assembly, interacts with ITPR1 in the secretory granules. Post-translationally, O-glycosylated by the trisaccharide, GalNAc-Gal-NeuAc, on 2 sites in the N-terminal. May be glycated. In terms of processing, extensively phosphorylated. Differentially processed on numerous sites throughout the sequence depending on tissue type.

It is found in the cytoplasmic vesicle. The protein resides in the secretory vesicle membrane. Its subcellular location is the secreted. Its function is as follows. Secretogranin-1 is a neuroendocrine secretory granule protein, which may be the precursor for other biologically active peptides. The 16 pairs of basic AA distributed throughout its sequence may be used as proteolytic cleavage sites. Secretolytin has antibacterial activity. The sequence is that of Secretogranin-1 (CHGB) from Bos taurus (Bovine).